The following is a 354-amino-acid chain: Protein PHLOEM PROTEIN 2-LIKE A8 (354 aa).

Positions 12-179 (TGPQVFINFR…EMILEIQKAL (168 aa)) constitute a TIR domain. Glu-86 is a catalytic residue.

It carries out the reaction NAD(+) + H2O = ADP-D-ribose + nicotinamide + H(+). The sequence is that of Protein PHLOEM PROTEIN 2-LIKE A8 (PP2A8) from Arabidopsis thaliana (Mouse-ear cress).